The sequence spans 370 residues: 3-isopropylmalate dehydrogenase (370 aa).

NAD(+) is bound at residue 77 to 90 (GPKWDSVPYEVRPE). Substrate-binding residues include arginine 97, arginine 107, arginine 135, and aspartate 226. Mg(2+)-binding residues include aspartate 226, aspartate 250, and aspartate 254. An NAD(+)-binding site is contributed by 290-302 (GSAPDIAGKGIAN).

Belongs to the isocitrate and isopropylmalate dehydrogenases family. LeuB type 1 subfamily. Homodimer. Requires Mg(2+) as cofactor. It depends on Mn(2+) as a cofactor.

Its subcellular location is the cytoplasm. The catalysed reaction is (2R,3S)-3-isopropylmalate + NAD(+) = 4-methyl-2-oxopentanoate + CO2 + NADH. Its pathway is amino-acid biosynthesis; L-leucine biosynthesis; L-leucine from 3-methyl-2-oxobutanoate: step 3/4. Catalyzes the oxidation of 3-carboxy-2-hydroxy-4-methylpentanoate (3-isopropylmalate) to 3-carboxy-4-methyl-2-oxopentanoate. The product decarboxylates to 4-methyl-2 oxopentanoate. The chain is 3-isopropylmalate dehydrogenase from Brucella abortus (strain 2308).